The sequence spans 820 residues: MAGELADKKDRDASPSKEERKRSRTPDRERDRDRDRKSSPSKDRKRHRSRDRRRGGSRSRSRSRSKSAERERRHKERERDKERDRNKKDRDRDKDGHRRDKDRKRSSLSPGRGKDFKSRKDRDSKKDEEDEHGDKKPKAQPLSLEELLAKKKAEEEAEAKPKFLSKAEREAEALKRRQQEVEERQRMLEEERKKRKQFQDLGRKMLEDPQERERRERRERMERETNGNEDEEGRQKIREEKDKSKELHAIKERYLGGIKKRRRTRHLNDRKFVFEWDASEDTSIDYNPLYKERHQVQLLGRGFIAGIDLKQQKREQSRFYGDLMEKRRTLEEKEQEEARLRKLRKKEAKQRWDDRHWSQKKLDEMTDRDWRIFREDYSITTKGGKIPNPIRSWKDSSLPPHILEVIDKCGYKEPTPIQRQAIPIGLQNRDIIGVAETGSGKTAAFLIPLLVWITTLPKIDRIEESDQGPYAIILAPTRELAQQIEEETIKFGKPLGIRTVAVIGGISREDQGFRLRMGCEIVIATPGRLIDVLENRYLVLSRCTYVVLDEADRMIDMGFEPDVQKILEHMPVSNQKPDTDEAEDPEKMLANFESGKHKYRQTVMFTATMPPAVERLARSYLRRPAVVYIGSAGKPHERVEQKVFLMSESEKRKKLLAILEQGFDPPIIIFVNQKKGCDVLAKSLEKMGYNACTLHGGKGQEQREFALSNLKAGAKDILVATDVAGRGIDIQDVSMVVNYDMAKNIEDYIHRIGRTGRAGKSGVAITFLTKEDSAVFYELKQAILESPVSSCPPELANHPDAQHKPGTILTKKRREETIFA.

A compositionally biased stretch (basic and acidic residues) spans 1–42 (MAGELADKKDRDASPSKEERKRSRTPDRERDRDRDRKSSPSK). A disordered region spans residues 1 to 244 (MAGELADKKD…QKIREEKDKS (244 aa)). 2 positions are modified to phosphoserine: S14 and S16. Residues 43–65 (DRKRHRSRDRRRGGSRSRSRSRS) show a composition bias toward basic residues. Basic and acidic residues predominate over residues 66-105 (KSAERERRHKERERDKERDRNKKDRDRDKDGHRRDKDRKR). Phosphoserine occurs at positions 107 and 109. Basic and acidic residues-rich tracts occupy residues 112–137 (RGKD…DKKP), 147–226 (LLAK…RETN), and 233–244 (GRQKIREEKDKS). The Q motif motif lies at 391–419 (RSWKDSSLPPHILEVIDKCGYKEPTPIQR). Residues 422–627 (IPIGLQNRDI…RSYLRRPAVV (206 aa)) form the Helicase ATP-binding domain. An ATP-binding site is contributed by 435–442 (AETGSGKT). The short motif at 549–552 (DEAD) is the DEAD box element. A Helicase C-terminal domain is found at 651–799 (KRKKLLAILE…SCPPELANHP (149 aa)). Glycyl lysine isopeptide (Lys-Gly) (interchain with G-Cter in SUMO2) cross-links involve residues K686 and K811.

It belongs to the DEAD box helicase family. DDX23/PRP28 subfamily. In terms of assembly, the phosphorylated form (by SRPK2) is a component of the U4/U6-U5 tri-snRNP complex composed of the U4, U6 and U5 snRNAs and at least PRPF3, PRPF4, PRPF6, PRPF8, PRPF31, SNRNP200, TXNL4A, WDR57, SNRNP40, DDX23, CD2BP2, PPIH, SNU13, EFTUD2, SART1 and USP39. Identified in the spliceosome C complex. Interacts with ERBB4. Interacts with ERCC6. Post-translationally, in vitro phosphorylated by CLK1 and U1 snRNP-associated protein kinase. Phosphorylated by SRPK2 and this phosphorylation is required for its association with the tri-snRNP (U4/U6-U5 tri-small nuclear ribonucleoproteins) and subsequent spliceosomal B complex formation. May be phosphorylated by SRPK2 on Ser residues in the SR domain; the phosphorylation is required for the removal of inappropriate R-loops during transcription.

The protein resides in the nucleus. The protein localises to the chromosome. It catalyses the reaction ATP + H2O = ADP + phosphate + H(+). In terms of biological role, involved in pre-mRNA splicing and its phosphorylated form (by SRPK2) is required for spliceosomal B complex formation. Independently of its spliceosome formation function, required for the suppression of incorrect R-loops formed during transcription; R-loops are composed of a DNA:RNA hybrid and the associated non-template single-stranded DNA. The sequence is that of Probable ATP-dependent RNA helicase DDX23 from Homo sapiens (Human).